A 326-amino-acid chain; its full sequence is GATA zinc finger domain-containing protein 21 (326 aa).

2 disordered regions span residues 1-102 and 145-238; these read MFRN…NNNN and QNQS…TPER. Composition is skewed to low complexity over residues 17 to 102 and 148 to 164; these read NTNL…NNNN and SSSSSSGASGSRSGSSA. Over residues 165–189 the composition is skewed to polar residues; that stretch reads LNSINNNNYSPTTSSLNRVRNQYNQ. Residues 193 to 218 are compositionally biased toward acidic residues; that stretch reads DEEDDDYDNGAEDGFDYDGDDNEDGS. The GATA-type zinc-finger motif lies at 239–266; that stretch reads CSNCKITHSSYWRRITVNGQKLDFCNAC. The interval 277–326 is disordered; it reads IKESKQRHSIQNIMNQNQEEEEEEREEEEEEEEEEDEEFETLEEEEEDDE. Residues 294-326 show a composition bias toward acidic residues; it reads QEEEEEEREEEEEEEEEEDEEFETLEEEEEDDE.

The protein is GATA zinc finger domain-containing protein 21 (gtaU) of Dictyostelium discoideum (Social amoeba).